The sequence spans 904 residues: Translation initiation factor IF-2 (904 aa).

The segment at 239 to 316 (QAATQAKTSE…DDGQGSFQAP (78 aa)) is disordered. The span at 248 to 278 (EGAEKGTLHKKPETPGKKGDKGGRAADDGKK) shows a compositional bias: basic and acidic residues. In terms of domain architecture, tr-type G spans 404–571 (HRAPVVTVMG…QVLLQAEILE (168 aa)). The interval 413-420 (GHVDHGKT) is G1. 413–420 (GHVDHGKT) serves as a coordination point for GTP. The tract at residues 438–442 (GITQH) is G2. Positions 459–462 (DTPG) are G3. Residues 459-463 (DTPGH) and 513-516 (NKID) each bind GTP. Residues 513–516 (NKID) are G4. Residues 549–551 (SAK) form a G5 region.

It belongs to the TRAFAC class translation factor GTPase superfamily. Classic translation factor GTPase family. IF-2 subfamily.

The protein resides in the cytoplasm. Functionally, one of the essential components for the initiation of protein synthesis. Protects formylmethionyl-tRNA from spontaneous hydrolysis and promotes its binding to the 30S ribosomal subunits. Also involved in the hydrolysis of GTP during the formation of the 70S ribosomal complex. This is Translation initiation factor IF-2 from Dechloromonas aromatica (strain RCB).